Consider the following 90-residue polypeptide: Probable Fe(2+)-trafficking protein (90 aa).

This sequence belongs to the Fe(2+)-trafficking protein family.

Its function is as follows. Could be a mediator in iron transactions between iron acquisition and iron-requiring processes, such as synthesis and/or repair of Fe-S clusters in biosynthetic enzymes. In Aliivibrio fischeri (strain ATCC 700601 / ES114) (Vibrio fischeri), this protein is Probable Fe(2+)-trafficking protein.